Consider the following 63-residue polypeptide: Large ribosomal subunit protein uL29 (63 aa).

The protein belongs to the universal ribosomal protein uL29 family.

This Psychromonas ingrahamii (strain DSM 17664 / CCUG 51855 / 37) protein is Large ribosomal subunit protein uL29.